A 1860-amino-acid polypeptide reads, in one-letter code: Proprotein convertase subtilisin/kexin type 5 (1860 aa).

An N-terminal signal peptide occupies residues 1-32 (MGWGSRCCCPGRLDLLCVLALLGGCLLPVCRT). Positions 33 to 114 (RVYTNHWAVK…QQVVKKRTKR (82 aa)) are excised as a propeptide. Over 115-1743 (DYDFSRAQST…VRPATEHFKT (1629 aa)) the chain is Extracellular. The Peptidase S8 domain maps to 134-453 (MWYMHCSDNT…FGLMDAEAMV (320 aa)). Catalysis depends on charge relay system residues aspartate 171 and histidine 212. Residues asparagine 225 and asparagine 381 are each glycosylated (N-linked (GlcNAc...) asparagine). Serine 386 (charge relay system) is an active-site residue. The P/Homo B domain occupies 461-601 (TVPRQHVCVE…SLVLYGTSVQ (141 aa)). Residues 519–521 (RGD) carry the Cell attachment site motif. FU repeat units follow at residues 630-680 (EDYA…GHYH), 683-730 (KKRC…GSYQ), 734-777 (KNLC…GRYF), 779-824 (GQDC…SYYF), 832-879 (YKSC…GEYV), 882-927 (HGHC…WKFE), 929-979 (ENQC…GHYA), 982-1028 (GNTC…GEVQ), 1032-1077 (YEEC…KTYS), 1079-1121 (EVEC…GFYG), 1125-1168 (MGEC…KTQE), 1177-1221 (LRKL…GTWP), 1225-1272 (SGSC…GSYA), 1274-1318 (DGIC…RHVA), 1320-1363 (KGVC…GFYA), 1365-1411 (SRHC…GTYY), 1415-1461 (TKEC…SEYW), 1465-1510 (APGC…GYYA), 1514-1559 (SNRC…GYYA), 1563-1610 (TGRC…HYYV), 1614-1659 (TQTC…GEYR), and 1665-1712 (KFNC…SDPP). Residues 636-1727 (CDPECSEVGC…CDCQDTTDEC (1092 aa)) are CRM (Cys-rich motif). The N-linked (GlcNAc...) asparagine glycan is linked to asparagine 665. Residues asparagine 752, asparagine 802, and asparagine 852 are each glycosylated (N-linked (GlcNAc...) asparagine). A PLAC domain is found at 869–913 (MGAICKDGEYVDEHGHCQTCEASCAKCQGPTQEDCTTCPMTRIFD). Asparagine 1014 carries an N-linked (GlcNAc...) asparagine glycan. Asparagine 1191 is a glycosylation site (N-linked (GlcNAc...) asparagine). A glycan (N-linked (GlcNAc...) asparagine) is linked at asparagine 1290. Asparagine 1497 is a glycosylation site (N-linked (GlcNAc...) asparagine). Asparagine 1685 and asparagine 1707 each carry an N-linked (GlcNAc...) asparagine glycan. Residues 1744 to 1764 (ALFITSSMMLVLLLGAAVVVW) traverse the membrane as a helical segment. At 1765 to 1860 (KKSRGRVQPA…YDDESYSYYQ (96 aa)) the chain is on the cytoplasmic side. 2 AC regions span residues 1807-1826 (VIEY…IVYM) and 1838-1860 (YGLL…SYYQ).

The protein belongs to the peptidase S8 family. As to expression, expressed in T-lymphocytes.

The protein localises to the secreted. The protein resides in the endomembrane system. In terms of biological role, serine endoprotease that processes various proproteins by cleavage at paired basic amino acids, recognizing the RXXX[KR]R consensus motif. Likely functions in the constitutive and regulated secretory pathways. Plays an essential role in pregnancy establishment by proteolytic activation of a number of important factors such as BMP2, CALD1 and alpha-integrins. This Homo sapiens (Human) protein is Proprotein convertase subtilisin/kexin type 5 (PCSK5).